The following is a 126-amino-acid chain: SPbeta prophage-derived uncharacterized protein YorC (126 aa).

The protein is SPbeta prophage-derived uncharacterized protein YorC (yorC) of Bacillus subtilis (strain 168).